We begin with the raw amino-acid sequence, 606 residues long: Peptide-N(4)-(N-acetyl-beta-glucosaminyl)asparagine amidase (606 aa).

The Thioredoxin domain maps to 2–108; the sequence is PVTEVGSLPE…IAEKIRQHYS (107 aa). Cys-191, Cys-194, Cys-225, and Cys-228 together coordinate Zn(2+). The active-site Nucleophile is Cys-251. Residues His-278 and Asp-295 contribute to the active site. One can recognise a PAW domain in the interval 404 to 606; sequence DLGGRITGSE…SFSVKIWMKN (203 aa).

This sequence belongs to the transglutaminase-like superfamily. PNGase family. Zn(2+) serves as cofactor.

The protein resides in the cytoplasm. It localises to the endoplasmic reticulum. The catalysed reaction is Hydrolysis of an N(4)-(acetyl-beta-D-glucosaminyl)asparagine residue in which the glucosamine residue may be further glycosylated, to yield a (substituted) N-acetyl-beta-D-glucosaminylamine and a peptide containing an aspartate residue.. With respect to regulation, inhibited by Zn(2+) and z-VAD-fmk (caspase inhibitor) but unaffected by EDTA. Its function is as follows. Specifically deglycosylates the denatured form of N-linked glycoproteins in the cytoplasm and assists their proteasome-mediated degradation. Cleaves the beta-aspartyl-glucosamine (GlcNAc) of the glycan and the amide side chain of Asn, converting Asn to Asp. Prefers proteins containing high-mannose over those bearing complex type oligosaccharides. Can recognize misfolded proteins in the endoplasmic reticulum that are exported to the cytosol to be destroyed and deglycosylate them, while it has no activity toward native proteins. Deglycosylation is a prerequisite for subsequent proteasome-mediated degradation of some, but not all, misfolded glycoproteins. Also displays oxidoreductase (thioredoxin) activity. Involved in regulating the expression of proteasomal subunits such as rpt-3 in order to confer resistance to proteasomal dysfunction. The sequence is that of Peptide-N(4)-(N-acetyl-beta-glucosaminyl)asparagine amidase (png-1) from Caenorhabditis elegans.